The sequence spans 831 residues: uncharacterized protein (831 aa).

The tract at residues 285-311 (ALNLKRQQLKEEQKEQQSTGDRSDVST) is disordered. 470–477 (GDTGNGKS) is a binding site for ATP.

This is an uncharacterized protein from Bacillus subtilis (strain 168).